A 685-amino-acid chain; its full sequence is Twinkle mtDNA helicase (685 aa).

A mitochondrion-targeting transit peptide spans 1–31 (MWLLLRRAYPLRILLPLRGEWVGRRGLPRSL). The tract at residues 1–122 (MWLLLRRAYP…LCMTSLAEGS (122 aa)) is contributes to single strand DNA binding activity. The N-terminal region (NTR) stretch occupies residues 54-214 (PVTTTEIRQY…LVFPWFTPGS (161 aa)). A required for hexamers formation and DNA helicase activity region spans residues 122 to 373 (SWEDLQASVE…WHKSIVSFRQ (252 aa)). The primase-like domain stretch occupies residues 215 to 335 (SGLRGLKLLG…LNPKRCSLVR (121 aa)). Positions 385 to 636 (VEQAAGVRWS…LTFSIPPKSK (252 aa)) constitute an SF4 helicase domain. Residues 406-591 (HRKGELTVFT…QEADNVLILQ (186 aa)) form a maybe required for stable oligomeric structure region. ATP is bound at residue 416-423 (GPTGSGKT). Residues 454–482 (RVMLTQFAVTRLEEQLDKYEEWADRFEDL) adopt a coiled-coil conformation. A might negatively regulate ATPase activity region spans residues 641–685 (KIKDDNGLVAKKSSSGKKGAAHQNPEICLGQDPSPAQPDTSKSSG). Residues 642 to 685 (IKDDNGLVAKKSSSGKKGAAHQNPEICLGQDPSPAQPDTSKSSG) are disordered.

As to quaternary structure, homohexamer (via C-terminus), which assembles in a ring-like structure. Homoheptamer, which assembles in a ring-like structure. Homooctamer, which assembles in a ring-like structure. Oligomers may sequentially eject two monomers (octamer&gt;heptamer&gt;hexamer) upon DNA binding. Oligomerization is Mg(2+), nucleotide and DNA-independent, however, Mg(2+) and nucleotide stabilize the homohexameric form. Interacts with POLG in vitro. Interacts with LONP1. Ubiquitous with the highest levels in the liver, heart and kidneys. The skeletal muscle, brain and testis showed lower but detectable expression. Expression is coregulated with MRPL43.

The protein localises to the mitochondrion matrix. It localises to the mitochondrion nucleoid. The protein resides in the mitochondrion inner membrane. It carries out the reaction ATP + H2O = ADP + phosphate + H(+). The enzyme catalyses Couples ATP hydrolysis with the unwinding of duplex DNA at the replication fork by translocating in the 5'-3' direction. This creates two antiparallel DNA single strands (ssDNA). The leading ssDNA polymer is the template for DNA polymerase III holoenzyme which synthesizes a continuous strand.. In terms of biological role, mitochondrial helicase involved in mtDNA replication and repair. Might have a role in mtDNA repair. Has DNA strand separation activity needed to form a processive replication fork for leading strand synthesis which is catalyzed by the formation of a replisome complex with POLG and mtSDB. Preferentially unwinds DNA substrates with pre-existing 5'-and 3'- single-stranded tails but is also active on a 5'- flap substrate. Can dissociate the invading strand of immobile or mobile D-loop DNA structures irrespective of the single strand polarity of the third strand. In addition to its DNA strand separation activity, also has DNA strand annealing, DNA strand-exchange and DNA branch migration activities. The chain is Twinkle mtDNA helicase from Mus musculus (Mouse).